The following is a 639-amino-acid chain: Actin assembly-inducing protein (639 aa).

The first 29 residues, 1–29 (MGLNRFMRAMMVVFITANCITINPDIIFA), serve as a signal peptide directing secretion. Disordered regions lie at residues 36-71 (SSLN…SSRD), 132-212 (RRHP…QPFF), 285-308 (LGFN…TDEE), and 320-341 (LGFN…PPTE). Residues 41–52 (DEWEEEKTEEQP) show a composition bias toward acidic residues. A compositionally biased stretch (basic and acidic residues) spans 62 to 71 (ETAREVSSRD). Over residues 190-210 (DSSMQSADESSPQPLKANQQP) the composition is skewed to polar residues. 2 consecutive repeat copies span residues 264-298 (DFPP…PSSF) and 299-333 (EFPP…PSSF). The tract at residues 264–333 (DFPPPPTDEE…APATSEPSSF (70 aa)) is 5 X approximate tandem repeats, Pro-rich. One copy of the 3; approximate repeat lies at 334–378 (EFPPPPTEDELEIIRETASSLDSSFTRGDLASLRNAINRHSQNFS). Positions 360–362 (RGD) match the Cell attachment site motif. Disordered stretches follow at residues 372–459 (RHSQ…LSPK) and 474–610 (KKTP…EPGN). The stretch at 379–417 (DFPPIPTEEELNGRGGRPTSEEFSSLNSGDFTDDENSET) is one 4; approximate repeat. The span at 409 to 422 (FTDDENSETTEEEI) shows a compositional bias: acidic residues. Residues 418 to 422 (TEEEI) form a 5; truncated repeat. Residues 423–433 (DRLADLRDRGT) are compositionally biased toward basic and acidic residues. Composition is skewed to low complexity over residues 450-459 (SSPVPSLSPK) and 490-509 (KKTT…TAPK). Composition is skewed to basic and acidic residues over residues 553–572 (EATE…KMVE) and 588–609 (GIEE…EEPG). Residues 613–633 (TLILAMLAIGVFSLGAFIKII) traverse the membrane as a helical segment.

Its subcellular location is the cell membrane. Virulence factor required for host cell microfilament interaction. It induces actin assembly around the bacteria to allow it to move within the cytoplasm. It is involved in the actin polymerization process. It seems to act as a nucleator that induces the reorganization of the actin cytoskeleton. In Listeria monocytogenes serovar 1/2a (strain ATCC BAA-679 / EGD-e), this protein is Actin assembly-inducing protein (actA).